We begin with the raw amino-acid sequence, 214 residues long: Probable transaldolase (214 aa).

The Schiff-base intermediate with substrate role is filled by lysine 83.

It belongs to the transaldolase family. Type 3B subfamily.

The protein localises to the cytoplasm. The enzyme catalyses D-sedoheptulose 7-phosphate + D-glyceraldehyde 3-phosphate = D-erythrose 4-phosphate + beta-D-fructose 6-phosphate. It participates in carbohydrate degradation; pentose phosphate pathway; D-glyceraldehyde 3-phosphate and beta-D-fructose 6-phosphate from D-ribose 5-phosphate and D-xylulose 5-phosphate (non-oxidative stage): step 2/3. Transaldolase is important for the balance of metabolites in the pentose-phosphate pathway. The polypeptide is Probable transaldolase (Dictyoglomus turgidum (strain DSM 6724 / Z-1310)).